The following is a 486-amino-acid chain: MNDQSITVRGKDRYKSGVMEYKKMGYWEPSYQPKDTDVIALFRVTPQDGVDPVEACAAVAGESSTATWTVVWTDRLTAAEKYRAKCYRVEPVPGSPGSYFAYIAYDLDLFEPGSIANLTASIIGNVFGFKPLKALRLEDMRLPVAYVKTFQGPATGIVVERERLDKFGRPLLGATVKPKLGLSGRNYGRVVYEALKGGLDFTKDDENINSQPFMHWRERFLYCMEAVNKAQAATGEIKGTYLNVTAATMEDMYERAEFAKELGSTIIMIDLVIGYTAIQSMAKWARRNDMILHLHRAGHSTYTRQRAHGVSFRVIAKWMRLAGVDHIHAGTVVGKLEGDPNTTRGYYDICREDFNPMRLEHGVFFDQHWASLNKLMPVASGGIHAGQMHQLLDLLGEDVVLQFGGGTIGHPRGIAAGATANRVALEAMILARNEGRDYVHEGPEILAKAAQTCTPLREALEIWKDVTFNYESTDSPDFVPTVTPAA.

Asn125 and Thr175 together coordinate substrate. The active-site Proton acceptor is the Lys177. Lys179 contributes to the substrate binding site. Mg(2+) contacts are provided by Lys203, Asp205, and Glu206. Lys203 carries the post-translational modification N6-carboxylysine. His295 functions as the Proton acceptor in the catalytic mechanism. Residues Arg296, His328, and Ser380 each contribute to the substrate site.

It belongs to the RuBisCO large chain family. Type I subfamily. In terms of assembly, heterohexadecamer of 8 large chains and 8 small chains. The cofactor is Mg(2+).

It carries out the reaction 2 (2R)-3-phosphoglycerate + 2 H(+) = D-ribulose 1,5-bisphosphate + CO2 + H2O. The catalysed reaction is D-ribulose 1,5-bisphosphate + O2 = 2-phosphoglycolate + (2R)-3-phosphoglycerate + 2 H(+). Functionally, ruBisCO catalyzes two reactions: the carboxylation of D-ribulose 1,5-bisphosphate, the primary event in carbon dioxide fixation, as well as the oxidative fragmentation of the pentose substrate. Both reactions occur simultaneously and in competition at the same active site. The protein is Ribulose bisphosphate carboxylase large chain 3 of Bradyrhizobium sp. (strain BTAi1 / ATCC BAA-1182).